We begin with the raw amino-acid sequence, 117 residues long: Ribosome-binding factor A (117 aa).

This sequence belongs to the RbfA family. In terms of assembly, monomer. Binds 30S ribosomal subunits, but not 50S ribosomal subunits or 70S ribosomes.

It localises to the cytoplasm. In terms of biological role, one of several proteins that assist in the late maturation steps of the functional core of the 30S ribosomal subunit. Associates with free 30S ribosomal subunits (but not with 30S subunits that are part of 70S ribosomes or polysomes). Required for efficient processing of 16S rRNA. May interact with the 5'-terminal helix region of 16S rRNA. In Lacticaseibacillus casei (strain BL23) (Lactobacillus casei), this protein is Ribosome-binding factor A.